Consider the following 306-residue polypeptide: Tyrosine--tRNA ligase (306 aa).

L-tyrosine-binding residues include Tyr-32 and Glu-36. Positions 37–45 (PSGKIHLGH) match the 'HIGH' region motif. The tract at residues 151–158 (YPIMQVND) is tyrosine. Residue Gln-173 coordinates L-tyrosine. The short motif at 204-208 (KMSSS) is the 'KMSKS' region element. Ser-207 contacts ATP. 2 interaction with t-RNA regions span residues 228-231 (KAYC) and 283-288 (HPMDLK).

This sequence belongs to the class-I aminoacyl-tRNA synthetase family. TyrS type 3 subfamily. Homodimer.

It localises to the cytoplasm. The enzyme catalyses tRNA(Tyr) + L-tyrosine + ATP = L-tyrosyl-tRNA(Tyr) + AMP + diphosphate + H(+). In terms of biological role, catalyzes the attachment of tyrosine to tRNA(Tyr) in a two-step reaction: tyrosine is first activated by ATP to form Tyr-AMP and then transferred to the acceptor end of tRNA(Tyr). The polypeptide is Tyrosine--tRNA ligase (tyrS) (Methanocaldococcus jannaschii (strain ATCC 43067 / DSM 2661 / JAL-1 / JCM 10045 / NBRC 100440) (Methanococcus jannaschii)).